The primary structure comprises 1357 residues: DNA-directed RNA polymerase subunit beta (1357 aa).

Belongs to the RNA polymerase beta chain family. The RNAP catalytic core consists of 2 alpha, 1 beta, 1 beta' and 1 omega subunit. When a sigma factor is associated with the core the holoenzyme is formed, which can initiate transcription.

The enzyme catalyses RNA(n) + a ribonucleoside 5'-triphosphate = RNA(n+1) + diphosphate. Its function is as follows. DNA-dependent RNA polymerase catalyzes the transcription of DNA into RNA using the four ribonucleoside triphosphates as substrates. This is DNA-directed RNA polymerase subunit beta from Pseudomonas fluorescens (strain ATCC BAA-477 / NRRL B-23932 / Pf-5).